Reading from the N-terminus, the 175-residue chain is Large ribosomal subunit protein uL18 (175 aa).

This sequence belongs to the universal ribosomal protein uL18 family. Part of the 50S ribosomal subunit. Contacts the 5S and 23S rRNAs.

This is one of the proteins that bind and probably mediate the attachment of the 5S RNA into the large ribosomal subunit, where it forms part of the central protuberance. This is Large ribosomal subunit protein uL18 from Methanoculleus marisnigri (strain ATCC 35101 / DSM 1498 / JR1).